The sequence spans 224 residues: PKHD-type hydroxylase Shewmr4_3244 (224 aa).

Positions 78-176 (QFYPPLFNRY…RTAAFMWLQS (99 aa)) constitute a Fe2OG dioxygenase domain. Residues H96, D98, and H157 each coordinate Fe cation. R167 contacts 2-oxoglutarate.

Requires Fe(2+) as cofactor. The cofactor is L-ascorbate.

This chain is PKHD-type hydroxylase Shewmr4_3244, found in Shewanella sp. (strain MR-4).